Here is a 247-residue protein sequence, read N- to C-terminus: 3-deoxy-manno-octulosonate cytidylyltransferase (247 aa).

The protein belongs to the KdsB family.

The protein localises to the cytoplasm. The enzyme catalyses 3-deoxy-alpha-D-manno-oct-2-ulosonate + CTP = CMP-3-deoxy-beta-D-manno-octulosonate + diphosphate. Its pathway is nucleotide-sugar biosynthesis; CMP-3-deoxy-D-manno-octulosonate biosynthesis; CMP-3-deoxy-D-manno-octulosonate from 3-deoxy-D-manno-octulosonate and CTP: step 1/1. It participates in bacterial outer membrane biogenesis; lipopolysaccharide biosynthesis. Its function is as follows. Activates KDO (a required 8-carbon sugar) for incorporation into bacterial lipopolysaccharide in Gram-negative bacteria. The protein is 3-deoxy-manno-octulosonate cytidylyltransferase of Pelodictyon phaeoclathratiforme (strain DSM 5477 / BU-1).